The sequence spans 144 residues: Large ribosomal subunit protein uL13 (144 aa).

This sequence belongs to the universal ribosomal protein uL13 family. As to quaternary structure, part of the 50S ribosomal subunit.

Its function is as follows. This protein is one of the early assembly proteins of the 50S ribosomal subunit, although it is not seen to bind rRNA by itself. It is important during the early stages of 50S assembly. The polypeptide is Large ribosomal subunit protein uL13 (Mycoplasmopsis pulmonis (strain UAB CTIP) (Mycoplasma pulmonis)).